The chain runs to 159 residues: 6,7-dimethyl-8-ribityllumazine synthase (159 aa).

Residues W30, 64 to 66 (TFE), and 88 to 90 (CVI) contribute to the 5-amino-6-(D-ribitylamino)uracil site. 93-94 (ET) serves as a coordination point for (2S)-2-hydroxy-3-oxobutyl phosphate. H96 functions as the Proton donor in the catalytic mechanism. F121 contacts 5-amino-6-(D-ribitylamino)uracil. R135 is a binding site for (2S)-2-hydroxy-3-oxobutyl phosphate.

The protein belongs to the DMRL synthase family.

The enzyme catalyses (2S)-2-hydroxy-3-oxobutyl phosphate + 5-amino-6-(D-ribitylamino)uracil = 6,7-dimethyl-8-(1-D-ribityl)lumazine + phosphate + 2 H2O + H(+). It functions in the pathway cofactor biosynthesis; riboflavin biosynthesis; riboflavin from 2-hydroxy-3-oxobutyl phosphate and 5-amino-6-(D-ribitylamino)uracil: step 1/2. In terms of biological role, catalyzes the formation of 6,7-dimethyl-8-ribityllumazine by condensation of 5-amino-6-(D-ribitylamino)uracil with 3,4-dihydroxy-2-butanone 4-phosphate. This is the penultimate step in the biosynthesis of riboflavin. This chain is 6,7-dimethyl-8-ribityllumazine synthase, found in Cytophaga hutchinsonii (strain ATCC 33406 / DSM 1761 / CIP 103989 / NBRC 15051 / NCIMB 9469 / D465).